A 226-amino-acid chain; its full sequence is Peptidyl-prolyl cis-trans isomerase CYP23 (226 aa).

The N-terminal stretch at 1–22 is a signal peptide; sequence MGITRNLILGLACLAFVSIAKA. In terms of domain architecture, PPIase cyclophilin-type spans 34-191; it reads VVFQTSYGDI…ERITILSTYY (158 aa).

Belongs to the cyclophilin-type PPIase family. As to expression, ubiquitous. Lower expression in roots.

It is found in the endoplasmic reticulum. It carries out the reaction [protein]-peptidylproline (omega=180) = [protein]-peptidylproline (omega=0). Functionally, PPIases accelerate the folding of proteins. It catalyzes the cis-trans isomerization of proline imidic peptide bonds in oligopeptides. The sequence is that of Peptidyl-prolyl cis-trans isomerase CYP23 (CYP23) from Arabidopsis thaliana (Mouse-ear cress).